The sequence spans 522 residues: Signal transduction histidine-protein kinase/phosphatase MprB (522 aa).

The Cytoplasmic segment spans residues 1–30 (MIRLYRPQRPPLRAPLRATPSLSLRWRVML). The helical transmembrane segment at 31 to 51 (LAMSMVAMVVVLMAFAVYAVI) threads the bilayer. The Extracellular portion of the chain corresponds to 52–167 (SAALYSDIDN…PTEAVMNKLR (116 aa)). A helical transmembrane segment spans residues 168–188 (WVLLIVGGVGVAVAAVAGGMV). Residues 189-522 (TRAGLRPVAR…SVDSQSARAR (334 aa)) are Cytoplasmic-facing. The 53-residue stretch at 190-242 (RAGLRPVARLTEAAERVARTDDLRPIPVFGSDELARLTESFNLMLRALAESRE) folds into the HAMP domain. A Histidine kinase domain is found at 250 to 470 (DAGHELRTPL…SFYVLLPGRS (221 aa)). H253 carries the phosphohistidine; by autocatalysis modification. The tract at residues 467–522 (PGRSLPPAGHSTPAGESETDQAEAATDPAVPVAGDTANSRESANVISVDSQSARAR) is disordered. Over residues 502 to 522 (TANSRESANVISVDSQSARAR) the composition is skewed to polar residues.

Mg(2+) is required as a cofactor. Requires Mn(2+) as cofactor. Post-translationally, autophosphorylated.

It is found in the cell membrane. It carries out the reaction ATP + protein L-histidine = ADP + protein N-phospho-L-histidine.. In terms of biological role, member of the two-component regulatory system MprB/MprA which contributes to maintaining a balance among several systems involved in stress resistance and is required for establishment and maintenance of persistent infection in the host. In response to environmental signals MprB acts both as a membrane-associated protein kinase that undergoes autophosphorylation and subsequently transfers the phosphate to MprA, and a protein phosphatase that dephosphorylates phospho-MprA. In Mycolicibacterium paratuberculosis (strain ATCC BAA-968 / K-10) (Mycobacterium paratuberculosis), this protein is Signal transduction histidine-protein kinase/phosphatase MprB (mprB).